The chain runs to 758 residues: MAVSAGSARTSPSSDKVQKDKAELISGPRQDSRIGKLLGFEWTDLSSWRRLVTLLNRPTDPASLAVFRFLFGFLMVLDIPQERGLSSLDRKYLDGLDVCRFPLLDALRPLPLDWMYLVYTIMFLGALGMMLGLCYRISCVLFLLPYWYVFLLDKTSWNNHSYLYGLLAFQLTFMDANHYWSVDGLLNAHRRNAHVPLWNYAVLRGQIFIVYFIAGVKKLDADWVEGYSMEYLSRHWLFSPFKLLLSEELTSLLVVHWGGLLLDLSAGFLLFFDVSRSIGLFFVSYFHCMNSQLFSIGMFSYVMLASSPLFCSPEWPRKLVSYCPRRLQQLLPLKAAPQPSVSCVYKRSRGKSGQKPGLRHQLGAAFTLLYLLEQLFLPYSHFLTQGYNNWTNGLYGYSWDMMVHSRSHQHVKITYRDGRTGELGYLNPGVFTQSRRWKDHADMLKQYATCLSRLLPKYNVTEPQIYFDIWVSINDRFQQRIFDPRVDIVQAAWSPFQRTSWVQPLLMDLSPWRAKLQEIKSSLDNHTEVVFIADFPGLHLENFVSEDLGNTSIQLLQGEVTVELVAEQKNQTLREGEKMQLPAGEYHKVYTTSPSPSCYMYVYVNTTELALEQDLAYLQELKEKVENGSETGPLPPELQPLLEGEVKGGPEPTPLVQTFLRRQQRLQEIERRRNTPFHERFFRFLLRKLYVFRRSFLMTCISLRNLILGRPSLEQLAQEVTYANLRPFEAVGELNPSNTDSSHSNPPESNPDPVHSEF.

The tract at residues 1 to 22 (MAVSAGSARTSPSSDKVQKDKA) is disordered. Ala2 carries the post-translational modification N-acetylalanine. Residues 2–60 (AVSAGSARTSPSSDKVQKDKAELISGPRQDSRIGKLLGFEWTDLSSWRRLVTLLNRPTD) lie on the Cytoplasmic side of the membrane. The helical transmembrane segment at 61–81 (PASLAVFRFLFGFLMVLDIPQ) threads the bilayer. Over 82-113 (ERGLSSLDRKYLDGLDVCRFPLLDALRPLPLD) the chain is Lumenal. An intrachain disulfide couples Cys99 to Cys450. Residues 114 to 134 (WMYLVYTIMFLGALGMMLGLC) form a helical membrane-spanning segment. The Cytoplasmic portion of the chain corresponds to 135–136 (YR). Residues 137–157 (ISCVLFLLPYWYVFLLDKTSW) form a helical membrane-spanning segment. Over 158–292 (NNHSYLYGLL…VSYFHCMNSQ (135 aa)) the chain is Lumenal. Lys218 (proton acceptor) is an active-site residue. A helical transmembrane segment spans residues 293–313 (LFSIGMFSYVMLASSPLFCSP). The Cytoplasmic segment spans residues 314–361 (EWPRKLVSYCPRRLQQLLPLKAAPQPSVSCVYKRSRGKSGQKPGLRHQ). A helical membrane pass occupies residues 362 to 382 (LGAAFTLLYLLEQLFLPYSHF). The Lumenal segment spans residues 383–758 (LTQGYNNWTN…SNPDPVHSEF (376 aa)). N-linked (GlcNAc...) asparagine glycans are attached at residues Asn459 and Asn550. Positions 732-758 (GELNPSNTDSSHSNPPESNPDPVHSEF) are disordered. Over residues 735–747 (NPSNTDSSHSNPP) the composition is skewed to polar residues.

It belongs to the vitamin K-dependent gamma-carboxylase family. In terms of assembly, monomer. May interact with CALU.

Its subcellular location is the endoplasmic reticulum membrane. It carries out the reaction 4-carboxy-L-glutamyl-[protein] + 2,3-epoxyphylloquinone + H2O + H(+) = phylloquinol + L-glutamyl-[protein] + CO2 + O2. Its function is as follows. Mediates the vitamin K-dependent carboxylation of glutamate residues to calcium-binding gamma-carboxyglutamate (Gla) residues with the concomitant conversion of the reduced hydroquinone form of vitamin K to vitamin K epoxide. Catalyzes gamma-carboxylation of various proteins, such as blood coagulation factors (F2, F7, F9 and F10), osteocalcin (BGLAP) or matrix Gla protein (MGP). In Homo sapiens (Human), this protein is Vitamin K-dependent gamma-carboxylase (GGCX).